Reading from the N-terminus, the 138-residue chain is Large ribosomal subunit protein uL16 (138 aa).

Basic residues predominate over residues 1–16 (MLIPKRVKYRRQHRPT). Residues 1–23 (MLIPKRVKYRRQHRPTRSGISKG) are disordered.

It belongs to the universal ribosomal protein uL16 family. Part of the 50S ribosomal subunit.

In terms of biological role, binds 23S rRNA and is also seen to make contacts with the A and possibly P site tRNAs. This is Large ribosomal subunit protein uL16 from Corynebacterium glutamicum (strain R).